The following is a 593-amino-acid chain: AT-rich interactive domain-containing protein 3A (593 aa).

A disordered region spans residues 14–222 (QQRARQELEA…PQLQPPDHGD (209 aa)). The span at 41–53 (AAPDEDREPESAR) shows a compositional bias: basic and acidic residues. Residues 54-87 (MQRAQMAALAAMRAAAAGLGHPASPGGSEDGPPG) show a composition bias toward low complexity. Phosphoserine is present on residues Ser-77, Ser-81, and Ser-88. Thr-98 is subject to Phosphothreonine. A phosphoserine mark is found at Ser-101 and Ser-119. A compositionally biased stretch (basic and acidic residues) spans 104–127 (RGREGPGEEHFEDMASDEDMKPKW). Positions 119 to 156 (SDEDMKPKWEEEEMEEDLGEDEEEEEEDYEDEEEEEDE) are acidic. The span at 128–158 (EEEEMEEDLGEDEEEEEEDYEDEEEEEDEEG) shows a compositional bias: acidic residues. Residues 238-330 (DPKRKEFLDD…YLYPYECEKR (93 aa)) form the ARID domain. A phosphoserine mark is found at Ser-353 and Ser-362. Residues Lys-398, Lys-399, Lys-452, and Lys-462 each participate in a glycyl lysine isopeptide (Lys-Gly) (interchain with G-Cter in SUMO2) cross-link. The REKLES domain occupies 444–541 (AALEQLREKL…GVLFAQPPAP (98 aa)). Residues 445–488 (ALEQLREKLESAEPPEKKMALVADEQQRLMQRALQQNFLAMAAQ) are important for nuclear localization. The interval 490 to 513 (PMSIRINSQASESRQDSAVNLTGT) is homodimerization. 2 disordered regions span residues 497-516 (SQAS…TNGS) and 539-593 (PAPT…NSLP). Residues 537-557 (QPPAPTPTSAPNKGGGGGGGS) are important for cytoplasmic localization. Gly residues predominate over residues 549–576 (KGGGGGGGSSSNAGGRGGNTGTSGGQAG). Low complexity predominate over residues 580-593 (LSTPSTSTSNNSLP).

Homodimer. Heterodimer with ARID3B. Interacts with E2F1. Interacts with GTF2I and BTK. In terms of tissue distribution, widely expressed, with highest expression in skeletal muscle, thalamus, and colon.

It localises to the nucleus. The protein resides in the cytoplasm. Transcription factor which may be involved in the control of cell cycle progression by the RB1/E2F1 pathway and in B-cell differentiation. In Homo sapiens (Human), this protein is AT-rich interactive domain-containing protein 3A (ARID3A).